Reading from the N-terminus, the 101-residue chain is MAKGQSLQDPFLNALRRERVPVSIYLVNGIKLQGQVESFDQFVILLKNTVSQMVYKHAISTVVPSRPVSHHSNTPSGSTNNYHGSNPSAPQQPQQDSDDAE.

The Sm domain maps to 9 to 68 (DPFLNALRRERVPVSIYLVNGIKLQGQVESFDQFVILLKNTVSQMVYKHAISTVVPSRPV). The segment at 63–101 (VPSRPVSHHSNTPSGSTNNYHGSNPSAPQQPQQDSDDAE) is disordered. Polar residues predominate over residues 70–86 (HHSNTPSGSTNNYHGSN).

Belongs to the Hfq family. In terms of assembly, homohexamer.

RNA chaperone that binds small regulatory RNA (sRNAs) and mRNAs to facilitate mRNA translational regulation in response to envelope stress, environmental stress and changes in metabolite concentrations. Also binds with high specificity to tRNAs. The chain is RNA-binding protein Hfq from Yersinia pseudotuberculosis serotype O:1b (strain IP 31758).